Reading from the N-terminus, the 135-residue chain is uncharacterized protein (135 aa).

Helical transmembrane passes span 20-40 (IFSF…NTKL) and 47-67 (IAYF…IHGT).

Belongs to the plectrovirus ORF5 family.

The protein localises to the host membrane. This is an uncharacterized protein from Spiroplasma virus SpV1-C74 (SpV1).